The following is a 1469-amino-acid chain: Chromosome condensation protein dpy-27 (1469 aa).

Residues Met-1–Glu-25 form a disordered region. Over residues Leu-9–Ala-18 the composition is skewed to basic and acidic residues. Gly-122 to Ser-129 serves as a coordination point for ATP. Positions Glu-356–Glu-542 form a coiled coil. An SMC hinge domain is found at Pro-621–Ile-736. The segment at Gly-758–Gly-781 is disordered. 3 coiled-coil regions span residues Leu-805 to Glu-974, Ala-1016 to Glu-1056, and Thr-1159 to Arg-1182. The segment at Leu-1404 to His-1469 is disordered. Over residues Glu-1439–Glu-1449 the composition is skewed to acidic residues.

This sequence belongs to the SMC family. SMC4 subfamily. As to quaternary structure, component of the dosage compensation complex, which contains the mix-1/SMC2 and dpy-27/SMC4 heterodimer, and three non SMC subunits that probably regulate the complex: dpy-26, capg-1 and dpy-28. Within the complex, interacts with dpy-28, mix-1, dpy-26 and capg-1. Interacts with dpy-21. Interacts with dpy-28; the interaction is required for dpy-28 protein stability and dpy-28 association with the X chromosome. Interacts with smcl-1.

Its subcellular location is the nucleus. It localises to the chromosome. Functionally, central component of the condensin I-like dosage compensation complex that associates specifically with hermaphrodite X chromosomes to reduce their gene transcription throughout development. Its strong similarity with the condensin subunit smc4 suggests that it may reduce the X-chromosome transcript level by condensing the chromatin structure during interphase. Involved in the recruitment of the dosage compensation proteins mix-1 and dpy-21 to the X chromosome. Might be involved in the reduction of histone H4 lysine 16 acetylation (H4K16ac) on dosage compensated X chromosomes. As a member of the dosage compensation complex, also binds to regulatory regions of the autosomal her-1 gene, required for male development, possibly contributing to its repression in hermaphrodites. Also plays a role in the regulation of growth and body fat metabolism downstream of the TOR complex 2 pathway. This chain is Chromosome condensation protein dpy-27 (dpy-27), found in Caenorhabditis elegans.